Consider the following 147-residue polypeptide: Ribosomal RNA large subunit methyltransferase H (147 aa).

Residues Leu-64, Gly-95, and 114–119 (LSSLTL) contribute to the S-adenosyl-L-methionine site.

The protein belongs to the RNA methyltransferase RlmH family. In terms of assembly, homodimer.

The protein localises to the cytoplasm. The enzyme catalyses pseudouridine(1915) in 23S rRNA + S-adenosyl-L-methionine = N(3)-methylpseudouridine(1915) in 23S rRNA + S-adenosyl-L-homocysteine + H(+). In terms of biological role, specifically methylates the pseudouridine at position 1915 (m3Psi1915) in 23S rRNA. The chain is Ribosomal RNA large subunit methyltransferase H from Polynucleobacter asymbioticus (strain DSM 18221 / CIP 109841 / QLW-P1DMWA-1) (Polynucleobacter necessarius subsp. asymbioticus).